The primary structure comprises 225 residues: Myelin-associated neurite-outgrowth inhibitor (225 aa).

Over 1-58 (MNPVYSPGSSGVPYANAKGIGYPAGFPMGYAAAAPAYSPNMYAGPNPAFQQELEHPAH) the chain is Cytoplasmic. A helical transmembrane segment spans residues 59-75 (VSSGVQMFMFGHAFSVA). The Extracellular portion of the chain corresponds to 76-173 (RNGAIPSGYT…PAPIQSPRGN (98 aa)). The chain crosses the membrane as a helical span at residues 174 to 193 (GVAMGMVAGTTMAMSAGTLL). Residues 194–225 (TSHYPSPVAPQVTMPTYRPPGTPTYSYVPPQW) lie on the Cytoplasmic side of the membrane.

Belongs to the FAM168 family.

It localises to the cytoplasm. Its subcellular location is the perinuclear region. The protein resides in the cell membrane. It is found in the cell projection. The protein localises to the axon. Inhibitor of neuronal axonal outgrowth. The protein is Myelin-associated neurite-outgrowth inhibitor (fam168b) of Xenopus laevis (African clawed frog).